The primary structure comprises 541 residues: Putative transferase YhbX (541 aa).

At 1-60 the chain is on the periplasmic side; it reads MTVFNKFARTFKSHWLLYLCVIVFGITNLVASSGAHMVQRLLFFVLTILVVKRISSLPLR. Residues 61 to 81 form a helical membrane-spanning segment; the sequence is LLVAAPFVLLTAADMSISLYS. Residues 82-110 lie on the Cytoplasmic side of the membrane; it reads WCTFGTTFNDGFAISVLQSDPDEVVKMLG. Residues 111–131 traverse the membrane as a helical segment; it reads MYIPYLCAFAFLSLLFLAVII. At 132-141 the chain is on the periplasmic side; that stretch reads KYDVSLPTKK. Residues 142–162 form a helical membrane-spanning segment; that stretch reads VTGILLLIVISGSLFSACQFA. At 163 to 264 the chain is on the cytoplasmic side; that stretch reads YKDAKNKKAF…RKQIKLFNQA (102 aa). The helical transmembrane segment at 265-285 threads the bilayer; the sequence is ISGAPYTALSVPLSLTADSVL. Residues 286 to 541 lie on the Periplasmic side of the membrane; sequence SHDIHNYPDN…QGNPTPEGQG (256 aa).

This sequence belongs to the phosphoethanolamine transferase family.

It localises to the cell inner membrane. Its function is as follows. Probably does not transfer phosphoethanolamine to lipid A. The protein is Putative transferase YhbX (yhbX) of Escherichia coli (strain K12).